The primary structure comprises 303 residues: Probable RuBisCO transcriptional regulator (303 aa).

An HTH lysR-type domain is found at 6–63 (FTLDQLRIFQAIVVEGSFQKAAQSLYISQPAVSLQIQNLEQQLNAPLFDRSHRKAKLT). Residues 23–42 (FQKAAQSLYISQPAVSLQIQ) constitute a DNA-binding region (H-T-H motif).

It belongs to the LysR transcriptional regulatory family.

It localises to the plastid. It is found in the chloroplast. Its function is as follows. Trans-acting transcriptional regulator of RuBisCO genes (rbcL and rbcS) expression. This is Probable RuBisCO transcriptional regulator (rbcR) from Cyanidioschyzon merolae (strain NIES-3377 / 10D) (Unicellular red alga).